The following is a 134-amino-acid chain: ATP synthase epsilon chain (134 aa).

This sequence belongs to the ATPase epsilon chain family. As to quaternary structure, F-type ATPases have 2 components, CF(1) - the catalytic core - and CF(0) - the membrane proton channel. CF(1) has five subunits: alpha(3), beta(3), gamma(1), delta(1), epsilon(1). CF(0) has three main subunits: a, b and c.

Its subcellular location is the cell membrane. Produces ATP from ADP in the presence of a proton gradient across the membrane. The protein is ATP synthase epsilon chain of Alkaliphilus metalliredigens (strain QYMF).